The chain runs to 338 residues: Beta-ketoacyl-[acyl-carrier-protein] synthase III (338 aa).

Catalysis depends on residues C119 and H261. The tract at residues 262–266 is ACP-binding; that stretch reads QANQR. Residue N291 is part of the active site.

This sequence belongs to the thiolase-like superfamily. FabH family. In terms of assembly, homodimer.

It is found in the cytoplasm. The enzyme catalyses malonyl-[ACP] + acetyl-CoA + H(+) = 3-oxobutanoyl-[ACP] + CO2 + CoA. Its pathway is lipid metabolism; fatty acid biosynthesis. Functionally, catalyzes the condensation reaction of fatty acid synthesis by the addition to an acyl acceptor of two carbons from malonyl-ACP. Catalyzes the first condensation reaction which initiates fatty acid synthesis and may therefore play a role in governing the total rate of fatty acid production. Possesses both acetoacetyl-ACP synthase and acetyl transacylase activities. Its substrate specificity determines the biosynthesis of branched-chain and/or straight-chain of fatty acids. This chain is Beta-ketoacyl-[acyl-carrier-protein] synthase III, found in Prochlorococcus marinus (strain NATL2A).